Reading from the N-terminus, the 430-residue chain is Enolase (430 aa).

Residue Gln-167 coordinates (2R)-2-phosphoglycerate. Residue Glu-209 is the Proton donor of the active site. Asp-245, Glu-286, and Asp-313 together coordinate Mg(2+). (2R)-2-phosphoglycerate-binding residues include Lys-338, Arg-367, Ser-368, and Lys-389. Residue Lys-338 is the Proton acceptor of the active site.

Belongs to the enolase family. Mg(2+) serves as cofactor.

Its subcellular location is the cytoplasm. It localises to the secreted. The protein resides in the cell surface. It catalyses the reaction (2R)-2-phosphoglycerate = phosphoenolpyruvate + H2O. It participates in carbohydrate degradation; glycolysis; pyruvate from D-glyceraldehyde 3-phosphate: step 4/5. In terms of biological role, catalyzes the reversible conversion of 2-phosphoglycerate (2-PG) into phosphoenolpyruvate (PEP). It is essential for the degradation of carbohydrates via glycolysis. This chain is Enolase, found in Parasynechococcus marenigrum (strain WH8102).